The following is a 391-amino-acid chain: GDSL esterase/lipase 22 (391 aa).

The signal sequence occupies residues 1–29; that stretch reads MMANNCNLVSVLCVILVLTLFHNPITVAG. Ser43 acts as the Nucleophile in catalysis. N-linked (GlcNAc...) asparagine glycans are attached at residues Asn105, Asn165, and Asn288. Residues Asp322 and His325 contribute to the active site. The disordered stretch occupies residues 372-391; sequence PATVHASDSSSSTSRGYEYY.

The protein belongs to the 'GDSL' lipolytic enzyme family. In terms of assembly, component of the PYK10 complex, at least composed of PYK10/BGLU23, BGLU21, BGLU22, JAL22, JAL23, PBP1/JAL30, PBP2/JAL31, JAL32, JAL33, JAL34, JAL35, GLL22 and GLL23.

It localises to the secreted. This chain is GDSL esterase/lipase 22 (GLL22), found in Arabidopsis thaliana (Mouse-ear cress).